The primary structure comprises 471 residues: UDP-N-acetylmuramoylalanine--D-glutamate ligase (471 aa).

Residue 135-141 coordinates ATP; sequence GTNGKTT.

It belongs to the MurCDEF family.

The protein resides in the cytoplasm. It catalyses the reaction UDP-N-acetyl-alpha-D-muramoyl-L-alanine + D-glutamate + ATP = UDP-N-acetyl-alpha-D-muramoyl-L-alanyl-D-glutamate + ADP + phosphate + H(+). It participates in cell wall biogenesis; peptidoglycan biosynthesis. Its function is as follows. Cell wall formation. Catalyzes the addition of glutamate to the nucleotide precursor UDP-N-acetylmuramoyl-L-alanine (UMA). In Frankia casuarinae (strain DSM 45818 / CECT 9043 / HFP020203 / CcI3), this protein is UDP-N-acetylmuramoylalanine--D-glutamate ligase.